The chain runs to 526 residues: GMP synthase [glutamine-hydrolyzing] (526 aa).

The 199-residue stretch at 9–207 (RILILNFGSQ…VLDICSCQGR (199 aa)) folds into the Glutamine amidotransferase type-1 domain. The active-site Nucleophile is Cys86. Residues His181 and Glu183 contribute to the active site. The GMPS ATP-PPase domain occupies 208-401 (WTPNNIKENI…LGLPFHMLYR (194 aa)). 235–241 (SGGVDST) serves as a coordination point for ATP.

In terms of assembly, homodimer.

The enzyme catalyses XMP + L-glutamine + ATP + H2O = GMP + L-glutamate + AMP + diphosphate + 2 H(+). It participates in purine metabolism; GMP biosynthesis; GMP from XMP (L-Gln route): step 1/1. Catalyzes the synthesis of GMP from XMP. This chain is GMP synthase [glutamine-hydrolyzing], found in Baumannia cicadellinicola subsp. Homalodisca coagulata.